We begin with the raw amino-acid sequence, 303 residues long: Protein translocase subunit SecF (303 aa).

6 consecutive transmembrane segments (helical) span residues 28-48 (SIILSLISFIWIGMYKFNFGI), 140-160 (IEAGTMAMLFSFAAIMIYIWV), 164-184 (WYFGLGILIALVHDVILALGF), 194-214 (LSTIAAVLTIIGYSVNDSVVI), 246-266 (ILTVVTTLLANLALVLFGGEA), and 272-292 (VLVFFGIIAGTYSSIFISAPI).

The protein belongs to the SecD/SecF family. SecF subfamily. In terms of assembly, forms a complex with SecD. Part of the essential Sec protein translocation apparatus which comprises SecA, SecYEG and auxiliary proteins SecDF-YajC and YidC.

The protein resides in the cell inner membrane. Functionally, part of the Sec protein translocase complex. Interacts with the SecYEG preprotein conducting channel. SecDF uses the proton motive force (PMF) to complete protein translocation after the ATP-dependent function of SecA. This chain is Protein translocase subunit SecF, found in Rickettsia bellii (strain OSU 85-389).